The primary structure comprises 521 residues: Cytochrome P450 1A1 (521 aa).

F229 is a binding site for substrate. C463 is a heme binding site.

The protein belongs to the cytochrome P450 family. Heme is required as a cofactor.

The protein resides in the endoplasmic reticulum membrane. The protein localises to the microsome membrane. It catalyses the reaction an organic molecule + reduced [NADPH--hemoprotein reductase] + O2 = an alcohol + oxidized [NADPH--hemoprotein reductase] + H2O + H(+). Its function is as follows. Cytochromes P450 are a group of heme-thiolate monooxygenases. They oxidize a variety of structurally unrelated compounds, including steroids, fatty acids, and xenobiotics. This chain is Cytochrome P450 1A1 (cyp1a1), found in Chelon saliens (Leaping mullet).